A 98-amino-acid polypeptide reads, in one-letter code: NADH-ubiquinone oxidoreductase chain 4L (98 aa).

The next 3 helical transmembrane spans lie at methionine 1 to methionine 21, alanine 29 to leucine 49, and isoleucine 61 to valine 81.

The protein belongs to the complex I subunit 4L family. In terms of assembly, core subunit of respiratory chain NADH dehydrogenase (Complex I) which is composed of 45 different subunits.

The protein localises to the mitochondrion inner membrane. The catalysed reaction is a ubiquinone + NADH + 5 H(+)(in) = a ubiquinol + NAD(+) + 4 H(+)(out). Its function is as follows. Core subunit of the mitochondrial membrane respiratory chain NADH dehydrogenase (Complex I) which catalyzes electron transfer from NADH through the respiratory chain, using ubiquinone as an electron acceptor. Part of the enzyme membrane arm which is embedded in the lipid bilayer and involved in proton translocation. The polypeptide is NADH-ubiquinone oxidoreductase chain 4L (MT-ND4L) (Balaenoptera omurai (Omura's baleen whale)).